We begin with the raw amino-acid sequence, 193 residues long: dTTP/UTP pyrophosphatase (193 aa).

Asp-71 (proton acceptor) is an active-site residue.

It belongs to the Maf family. YhdE subfamily. A divalent metal cation is required as a cofactor.

It is found in the cytoplasm. It catalyses the reaction dTTP + H2O = dTMP + diphosphate + H(+). The catalysed reaction is UTP + H2O = UMP + diphosphate + H(+). Its function is as follows. Nucleoside triphosphate pyrophosphatase that hydrolyzes dTTP and UTP. May have a dual role in cell division arrest and in preventing the incorporation of modified nucleotides into cellular nucleic acids. The protein is dTTP/UTP pyrophosphatase of Dictyoglomus thermophilum (strain ATCC 35947 / DSM 3960 / H-6-12).